Reading from the N-terminus, the 31-residue chain is Alcohol dehydrogenase 1 (31 aa).

Cys7 contacts Zn(2+).

This sequence belongs to the zinc-containing alcohol dehydrogenase family. Class-P subfamily. In terms of assembly, homodimer. Zn(2+) serves as cofactor.

Its subcellular location is the cytoplasm. The catalysed reaction is a primary alcohol + NAD(+) = an aldehyde + NADH + H(+). The enzyme catalyses a secondary alcohol + NAD(+) = a ketone + NADH + H(+). This is Alcohol dehydrogenase 1 from Catharanthus roseus (Madagascar periwinkle).